Consider the following 476-residue polypeptide: Glutamyl-tRNA(Gln) amidotransferase subunit A (476 aa).

Catalysis depends on charge relay system residues K77 and S152. S176 acts as the Acyl-ester intermediate in catalysis.

Belongs to the amidase family. GatA subfamily. In terms of assembly, heterotrimer of A, B and C subunits.

It catalyses the reaction L-glutamyl-tRNA(Gln) + L-glutamine + ATP + H2O = L-glutaminyl-tRNA(Gln) + L-glutamate + ADP + phosphate + H(+). Functionally, allows the formation of correctly charged Gln-tRNA(Gln) through the transamidation of misacylated Glu-tRNA(Gln) in organisms which lack glutaminyl-tRNA synthetase. The reaction takes place in the presence of glutamine and ATP through an activated gamma-phospho-Glu-tRNA(Gln). This is Glutamyl-tRNA(Gln) amidotransferase subunit A from Acidobacterium capsulatum (strain ATCC 51196 / DSM 11244 / BCRC 80197 / JCM 7670 / NBRC 15755 / NCIMB 13165 / 161).